A 355-amino-acid chain; its full sequence is Peptide chain release factor 1 (355 aa).

The residue at position 233 (Gln-233) is an N5-methylglutamine. The span at 280–293 (ERRKKEQERADSRR) shows a compositional bias: basic and acidic residues. The interval 280–306 (ERRKKEQERADSRRGQVGSGNRSERIR) is disordered.

The protein belongs to the prokaryotic/mitochondrial release factor family. Post-translationally, methylated by PrmC. Methylation increases the termination efficiency of RF1.

It is found in the cytoplasm. Functionally, peptide chain release factor 1 directs the termination of translation in response to the peptide chain termination codons UAG and UAA. The chain is Peptide chain release factor 1 from Rickettsia africae (strain ESF-5).